The primary structure comprises 1389 residues: MAERADLVFHNKVIDGTAMKRLISRLIDHFGMAYTSHILDQVKTLGFQQATATSISLGIDDLLTIPSKGWLVQDAEQQSLILEKYHHYGNVHAVEKLRQSIEIWYATSEYLRQEMNPNFRMTDPSNPVHIMSFSGARGNASQVHQLVGMRGLMSDPQGQMIDLPIQSNLREGLSLTEYIISCYGARKGVVDTAVRTSDAGYLTRRLVEVVQHIVVRRTDCGTIRGIFVSPQNGMAKRIFIQTLIGRVLADDIYMGPRCIAARNQYIGIGLVNRFITFRAQPISIRTPFTCRSTSWICRLCYGRSPTHGDLVELGEAVGIIAGQSIGEPGTQLTLRTFHTGGVFTGGTAEHVRAPSNGKIKFNEDLVHPTRTRHGHPAFLCYIDLYVTIENQDIIHNVNIPPKSFLLVQNDQYVESEQVIAEIRAGASTLNFKERVRKHIYSDSEGEMHWSTDVYHASEYTYGNVHLLPKTSHLWILSGSPYRSSIVPFSLHKDQDQMNVHSLSVERGSISDLSVTNDRVRHKLFSSDLSGKKRGGILDYSGPDRIISNGHGHWNFIYPAILHENSDLLAKRRRNRFIIPFQYDQEREKELMPRSGISIEIPINGIFRRKSILAYFDDPRYRKSSSGITKYGTIEVDSIVKKEDLIEYRGAKEFRPKYQMKVDRFFFIPEEVHILTGSSSIMVRNNSIIGVDTRIALNTRSRVGGLVRVEKKKKRIELKIFSGDIHFPGETDKISRHSGILIPPGTGKKNPKESKKWKNWIYVQQITPTKKKYFVSVRSVVTYEIADGINLATLFPQDLLQERDNVQLRVVNYILYGNGKPIRGISHTSIQLVRTCLVLNWDQDRNGSIEEAHASFVEVRANALIRDFIRIHLVKSPISYTVKRNDTASSGLIPDNASDRPNINPFDFKARVQSLTQHQGTIRTLLNRNKECQSLIILSSSNCSRLGPFNGSKYHNVTKESIQTKDKEDPSISIRNSLGPLGIVPKIANFYYLMTHNQILLNKYLLLDNLKQTFQVLQYYQVIKYSLMDENGQIYNPDPYSNTILNPFDLNWRFLHHDYCEETSTIISLGQFICENGCISKYGPHIESGQVLIVHVDSLVIRSAKPHLATPGATVHGHYGEILYEGDTLVTFIYEKSRSGDITQGLPKVEQVLEVRSIDSISINLEKRVEGWNERITRIIGIPWGFLIGAELTIAQSRISLVNKIQKVYRSQGVQIHNRHIEIIVRQITSKVLVSEDGMSNVFSPGELIGLLRAERTGRALEEAICYRAILLGITRTSLNTQSFISEASFQETARVLAKAALRGRIDWLKGLKENVVLGGMIPVGTGFKGLVHRSRQHNNSPLEIKKKNLFEGEMRDILFHHRELFGSCIPNHFHDTSEQSFTFTGFHDS.

C220, C290, C297, and C300 together coordinate Zn(2+).

It belongs to the RNA polymerase beta' chain family. RpoC2 subfamily. In plastids the minimal PEP RNA polymerase catalytic core is composed of four subunits: alpha, beta, beta', and beta''. When a (nuclear-encoded) sigma factor is associated with the core the holoenzyme is formed, which can initiate transcription. Zn(2+) serves as cofactor.

Its subcellular location is the plastid. The protein resides in the chloroplast. It catalyses the reaction RNA(n) + a ribonucleoside 5'-triphosphate = RNA(n+1) + diphosphate. In terms of biological role, DNA-dependent RNA polymerase catalyzes the transcription of DNA into RNA using the four ribonucleoside triphosphates as substrates. The sequence is that of DNA-directed RNA polymerase subunit beta'' from Chloranthus spicatus (Chulantree).